Consider the following 138-residue polypeptide: Putative pre-16S rRNA nuclease (138 aa).

Belongs to the YqgF nuclease family.

The protein localises to the cytoplasm. In terms of biological role, could be a nuclease involved in processing of the 5'-end of pre-16S rRNA. This is Putative pre-16S rRNA nuclease from Polaromonas sp. (strain JS666 / ATCC BAA-500).